The primary structure comprises 150 residues: MAFHSMLLVFLAGLVFLTEAAPLVSHGSIDSKCPLMVKVLDAVRGSPAANVAIKVFKKTSDGDWQEFAAGKTTEFGEVHELTSDEKFVEGIYRVEFDTSSYWKALGLSPFHEYADVVFTANDSGHRHYTIAALLSPFSYSTTAVVSDPQE.

A signal peptide spans 1–20 (MAFHSMLLVFLAGLVFLTEA). Cysteine 33 is subject to Sulfocysteine. Residues lysine 38, glutamate 77, and serine 140 each contribute to the L-thyroxine site.

The protein belongs to the transthyretin family. As to quaternary structure, homotetramer. Dimer of dimers. In the homotetramer, subunits assemble around a central channel that can accommodate two ligand molecules. Interacts with RBP4. In terms of processing, sulfonation of the reactive cysteine Cys-33 enhances the stability of the native conformation of TTR, avoiding misassembly of the protein leading to amyloid formation. As to expression, strongly expressed in the brain, and to a lesser extent in the eye.

It is found in the secreted. Thyroid hormone-binding protein, with a much higher binding affinity for triiodothyronine (T3) than for thyroxine (T4). Probably transports triiodothyronine from the bloodstream to the brain. The protein is Transthyretin (TTR) of Crocodylus porosus (Saltwater crocodile).